A 312-amino-acid chain; its full sequence is Malate dehydrogenase 1 (312 aa).

Residues 11–16 (GAGQIG) and Asp35 each bind NAD(+). Arg86 and Arg92 together coordinate substrate. NAD(+) is bound by residues Asn99 and 122–124 (ITN). Substrate-binding residues include Asn124 and Arg155. Residue His179 is the Proton acceptor of the active site.

This sequence belongs to the LDH/MDH superfamily. MDH type 3 family.

The enzyme catalyses (S)-malate + NAD(+) = oxaloacetate + NADH + H(+). Functionally, catalyzes the reversible oxidation of malate to oxaloacetate. The sequence is that of Malate dehydrogenase 1 from Anaeromyxobacter dehalogenans (strain 2CP-C).